A 459-amino-acid chain; its full sequence is uncharacterized protein (459 aa).

A TRAM domain is found at 2-60; the sequence is NLRVKQKIPLKIKRMGINGEGIGFYKRTLVFVPGALKGEEIFCQITSVKHNFVQARLLT. C73, C79, C82, and C162 together coordinate [4Fe-4S] cluster. Positions 284, 313, 334, and 382 each coordinate S-adenosyl-L-methionine. The active-site Nucleophile is the C409.

It belongs to the class I-like SAM-binding methyltransferase superfamily. RNA M5U methyltransferase family.

This is an uncharacterized protein from Streptococcus mutans serotype c (strain ATCC 700610 / UA159).